Here is a 36-residue protein sequence, read N- to C-terminus: Photosystem I reaction center subunit VIII (36 aa).

A helical membrane pass occupies residues 9–29 (ILVPLVGLVFPAIAMASLFLY).

Belongs to the PsaI family.

The protein localises to the plastid. The protein resides in the chloroplast thylakoid membrane. Functionally, may help in the organization of the PsaL subunit. The chain is Photosystem I reaction center subunit VIII from Oltmannsiellopsis viridis (Marine flagellate).